The following is a 192-amino-acid chain: Signal peptidase complex catalytic subunit sec11 (192 aa).

The Cytoplasmic segment spans residues 1–18 (MLSFLSSNLSNTRQSIAQ). Residues 19 to 39 (VLNFALVLSTAFMLWKGLSVV) traverse the membrane as a helical; Signal-anchor for type II membrane protein segment. The Lumenal segment spans residues 40 to 192 (TASSSPIVVV…MGLMVILQRE (153 aa)). Catalysis depends on charge relay system residues Ser-53, His-92, and Asp-134. Residues 178–189 (VLLGIMGLMVIL) form a C-terminal short (CTS) helix region.

It belongs to the peptidase S26B family. As to quaternary structure, component of the signal peptidase complex (SPC) composed of a catalytic subunit SEC11 and three accessory subunits SPC1, SPC2 and SPC3. The complex induces a local thinning of the ER membrane which is used to measure the length of the signal peptide (SP) h-region of protein substrates. This ensures the selectivity of the complex towards h-regions shorter than 18-20 amino acids. SPC associates with the translocon complex.

It localises to the endoplasmic reticulum membrane. The catalysed reaction is Cleavage of hydrophobic, N-terminal signal or leader sequences from secreted and periplasmic proteins.. In terms of biological role, catalytic component of the signal peptidase complex (SPC) which catalyzes the cleavage of N-terminal signal sequences from nascent proteins as they are translocated into the lumen of the endoplasmic reticulum. Specifically cleaves N-terminal signal peptides that contain a hydrophobic alpha-helix (h-region) shorter than 18-20 amino acids. This Emericella nidulans (strain FGSC A4 / ATCC 38163 / CBS 112.46 / NRRL 194 / M139) (Aspergillus nidulans) protein is Signal peptidase complex catalytic subunit sec11 (sec11).